The chain runs to 291 residues: MATATVRPAAQRLRLLLSPLKSRICVPQAEPVATFGTAVTSAKVAVNGVHLHYQRVGEGEHAILLLPGMLGSGKTDFAPQLQSLNKKRFTLVAWDPRGYGYSRPPDRDFPRDFFERDAKDAVDLMKALQFKQVSLLGWSDGGITALIAAAKYPSYIRKMVIWGANAYVTEEDSRIYQGIRDVSKWSEKARKPLEALYGYDYLAKTCEDWVDGISQFKQLPEGNICRHLLPLVQCPTLIVHGEKDPLVPRFHADFLLQHVKGSRLHLMPEGKHNLHLRFADEFNRLVEDFLQ.

The signal sequence occupies residues 1–37 (MATATVRPAAQRLRLLLSPLKSRICVPQAEPVATFGT). The region spanning 62-173 (AILLLPGMLG…ANAYVTEEDS (112 aa)) is the AB hydrolase-1 domain. Lys74 bears the N6-acetyllysine; alternate mark. At Lys74 the chain carries N6-succinyllysine; alternate. Residues Lys86 and Lys119 each carry the N6-acetyllysine modification. Lys126 is subject to N6-acetyllysine; alternate. Lys126 carries the N6-succinyllysine; alternate modification. The active-site Nucleophile is the Ser139. Lys184 bears the N6-succinyllysine mark. Lys191 is modified (N6-acetyllysine; alternate). The residue at position 191 (Lys191) is an N6-succinyllysine; alternate. N6-acetyllysine is present on Lys217. Residue Glu221 coordinates Mg(2+). Residue Lys243 is modified to N6-acetyllysine. Asp244 functions as the Charge relay system in the catalytic mechanism. 2 positions are modified to N6-acetyllysine; alternate: Lys260 and Lys271. An N6-succinyllysine; alternate mark is found at Lys260 and Lys271. The active-site Charge relay system is the His272.

Belongs to the AB hydrolase superfamily. Lipase family. In terms of assembly, monomer. May also form homodimers.

It localises to the mitochondrion. The catalysed reaction is L-homocysteine thiolactone + H2O = L-homocysteine + H(+). It carries out the reaction valacyclovir + H2O = acyclovir + L-valine + H(+). Specific alpha-amino acid ester serine hydrolase that prefers small, hydrophobic, and aromatic side chains and does not have a stringent requirement for the leaving group other than preferring a primary alcohol. Has homocysteine-thiolactonase activity (in vitro) and may play a significant role in the detoxification of homocysteine thiolactone in vivo. Catalyzes the hydrolytic activation of amino acid ester prodrugs of nucleoside analogs such as valacyclovir and valganciclovir, converting them into their active forms (acyclovir and ganciclovir). This is Serine hydrolase BPHL (Bphl) from Mus musculus (Mouse).